The primary structure comprises 257 residues: tRNA pseudouridine synthase A (257 aa).

Asp53 serves as the catalytic Nucleophile. Tyr111 provides a ligand contact to substrate.

It belongs to the tRNA pseudouridine synthase TruA family. As to quaternary structure, homodimer.

It carries out the reaction uridine(38/39/40) in tRNA = pseudouridine(38/39/40) in tRNA. Its function is as follows. Formation of pseudouridine at positions 38, 39 and 40 in the anticodon stem and loop of transfer RNAs. The polypeptide is tRNA pseudouridine synthase A (Xylella fastidiosa (strain M12)).